A 341-amino-acid polypeptide reads, in one-letter code: L-threonine 3-dehydrogenase (341 aa).

Position 38 (cysteine 38) interacts with Zn(2+). Residues threonine 40 and histidine 43 each act as charge relay system in the active site. Zn(2+) contacts are provided by histidine 63, glutamate 64, cysteine 93, cysteine 96, cysteine 99, and cysteine 107. NAD(+)-binding positions include isoleucine 175, aspartate 195, arginine 200, 262 to 264, and 286 to 287; these read LGI and IY.

It belongs to the zinc-containing alcohol dehydrogenase family. In terms of assembly, homotetramer. Zn(2+) serves as cofactor.

The protein localises to the cytoplasm. It catalyses the reaction L-threonine + NAD(+) = (2S)-2-amino-3-oxobutanoate + NADH + H(+). It functions in the pathway amino-acid degradation; L-threonine degradation via oxydo-reductase pathway; glycine from L-threonine: step 1/2. In terms of biological role, catalyzes the NAD(+)-dependent oxidation of L-threonine to 2-amino-3-ketobutyrate. This chain is L-threonine 3-dehydrogenase, found in Escherichia coli (strain K12 / MC4100 / BW2952).